We begin with the raw amino-acid sequence, 289 residues long: MKSGFVSLIGRTNAGKSSLLNFLVGERLAMVSHKINATRRKINGIAMFGEDQIIFIDTPGLHKSEKIMNKLMIDVAIKSIGDADLVLFLASIHDDTRDYEEFLKIAKRPPHILILTKTDETDDGKIAKKLGEYAKFCKEFCAIIPVNIKKKVYRAEILREIAKLLPEHEYFFDPQIISNTNLRDIYRDFILESVYESVSSEIPYNSDVLIEKITEKEQITKISAKIITDTNSHKQILIGKGGETIKRIGIKSRKRISDFSKVKIHLNLQIFVKKGWKNDENLVKSVFVY.

Positions 2–167 constitute an Era-type G domain; it reads KSGFVSLIGR…LREIAKLLPE (166 aa). Residues 10 to 17 are G1; sequence GRTNAGKS. 10–17 contacts GTP; sequence GRTNAGKS. The tract at residues 36-40 is G2; the sequence is NATRR. Residues 57-60 form a G3 region; the sequence is DTPG. GTP-binding positions include 57–61 and 116–119; these read DTPGL and TKTD. A G4 region spans residues 116–119; the sequence is TKTD. The G5 stretch occupies residues 146 to 148; sequence VNI. Positions 186 to 274 constitute a KH type-2 domain; that stretch reads YRDFILESVY…HLNLQIFVKK (89 aa).

It belongs to the TRAFAC class TrmE-Era-EngA-EngB-Septin-like GTPase superfamily. Era GTPase family. As to quaternary structure, monomer.

It is found in the cytoplasm. The protein resides in the cell inner membrane. An essential GTPase that binds both GDP and GTP, with rapid nucleotide exchange. Plays a role in 16S rRNA processing and 30S ribosomal subunit biogenesis and possibly also in cell cycle regulation and energy metabolism. In Campylobacter hominis (strain ATCC BAA-381 / DSM 21671 / CCUG 45161 / LMG 19568 / NCTC 13146 / CH001A), this protein is GTPase Era.